We begin with the raw amino-acid sequence, 640 residues long: Probable potassium transport system protein Kup 3 (640 aa).

A compositionally biased stretch (low complexity) spans Met1–Thr15. Residues Met1–Asp20 form a disordered region. 12 helical membrane passes run Leu30 to Leu50, Val71 to Leu91, Ala117 to Ile137, Ala155 to Val175, Val183 to Phe203, Phe224 to Thr244, Trp265 to Ile285, Pro294 to Ala314, Leu363 to Ser383, Tyr385 to Trp405, Trp410 to Leu430, and Val437 to Thr457.

This sequence belongs to the HAK/KUP transporter (TC 2.A.72) family.

The protein localises to the cell inner membrane. It carries out the reaction K(+)(in) + H(+)(in) = K(+)(out) + H(+)(out). Its function is as follows. Transport of potassium into the cell. Likely operates as a K(+):H(+) symporter. The polypeptide is Probable potassium transport system protein Kup 3 (Bradyrhizobium sp. (strain BTAi1 / ATCC BAA-1182)).